A 95-amino-acid chain; its full sequence is Small ribosomal subunit protein bS20 (95 aa).

The protein belongs to the bacterial ribosomal protein bS20 family.

In terms of biological role, binds directly to 16S ribosomal RNA. The chain is Small ribosomal subunit protein bS20 from Ehrlichia ruminantium (strain Gardel).